We begin with the raw amino-acid sequence, 162 residues long: NADH-ubiquinone oxidoreductase 24 kDa subunit homolog C11E3.12, mitochondrial (162 aa).

[2Fe-2S] cluster contacts are provided by cysteine 88, cysteine 93, cysteine 125, and cysteine 129.

The protein belongs to the complex I 24 kDa subunit family. It depends on [2Fe-2S] cluster as a cofactor.

It is found in the mitochondrion. This is NADH-ubiquinone oxidoreductase 24 kDa subunit homolog C11E3.12, mitochondrial from Schizosaccharomyces pombe (strain 972 / ATCC 24843) (Fission yeast).